The chain runs to 296 residues: Protoheme IX farnesyltransferase (296 aa).

The Cytoplasmic segment spans residues 1-9; the sequence is MMFKQYLQV. Residues 10 to 28 form a helical membrane-spanning segment; the sequence is TKPGIIFGNLISVIGGFLL. At 29 to 37 the chain is on the periplasmic side; that stretch reads ASKGSIDYP. Residues 38-56 traverse the membrane as a helical segment; that stretch reads LFIYTLVGVSLVVASGCVF. Topologically, residues 57-78 are cytoplasmic; sequence NNYIDRDIDRKMERTKNRVLVK. A helical membrane pass occupies residues 79–97; that stretch reads GLISPAVSLVYATLLGFAG. Over 98–107 the chain is Periplasmic; sequence FMLLWFGANP. Residues 108-126 form a helical membrane-spanning segment; it reads LACWLGVMGFVVYVGVYSL. The Cytoplasmic segment spans residues 127–197; sequence YMKRHSVYGT…YQAANIPVLP (71 aa). The helical transmembrane segment at 198–216 threads the bilayer; the sequence is VVKGISVAKNHITLYIIAF. Topologically, residues 217 to 228 are periplasmic; the sequence is AVATLMLSLGGY. A helical membrane pass occupies residues 229–247; it reads AGYKYLVVAAAVSVWWLGM. Over 248 to 268 the chain is Cytoplasmic; sequence ALRGYKVADDRIWARKLFGFS. The helical transmembrane segment at 269 to 287 threads the bilayer; that stretch reads IIAITALSVMMSVDFMVPD. Residues 288 to 296 lie on the Periplasmic side of the membrane; sequence SHTLLAAVW.

This sequence belongs to the UbiA prenyltransferase family. Protoheme IX farnesyltransferase subfamily.

It is found in the cell inner membrane. It catalyses the reaction heme b + (2E,6E)-farnesyl diphosphate + H2O = Fe(II)-heme o + diphosphate. It participates in porphyrin-containing compound metabolism; heme O biosynthesis; heme O from protoheme: step 1/1. Functionally, converts heme B (protoheme IX) to heme O by substitution of the vinyl group on carbon 2 of heme B porphyrin ring with a hydroxyethyl farnesyl side group. The protein is Protoheme IX farnesyltransferase of Shigella sonnei (strain Ss046).